Consider the following 285-residue polypeptide: Hydroxyethylthiazole kinase 1 (285 aa).

Met-48 provides a ligand contact to substrate. Arg-124 and Ser-183 together coordinate ATP. Substrate is bound at residue Gly-210.

Belongs to the Thz kinase family. Mg(2+) serves as cofactor.

It carries out the reaction 5-(2-hydroxyethyl)-4-methylthiazole + ATP = 4-methyl-5-(2-phosphooxyethyl)-thiazole + ADP + H(+). Its pathway is cofactor biosynthesis; thiamine diphosphate biosynthesis; 4-methyl-5-(2-phosphoethyl)-thiazole from 5-(2-hydroxyethyl)-4-methylthiazole: step 1/1. In terms of biological role, catalyzes the phosphorylation of the hydroxyl group of 4-methyl-5-beta-hydroxyethylthiazole (THZ). The polypeptide is Hydroxyethylthiazole kinase 1 (Methanosphaera stadtmanae (strain ATCC 43021 / DSM 3091 / JCM 11832 / MCB-3)).